The primary structure comprises 947 residues: Protein RRC1-like (947 aa).

Basic and acidic residues predominate over residues 1–11 (MVKDEFFLDHP). Disordered regions lie at residues 1–35 (MVKD…RMKQ) and 63–167 (PNDN…DELP). Residues 12–34 (GRKHRSRNTEKKKKPRRRERRMK) show a composition bias toward basic residues. 2 stretches are compositionally biased toward basic and acidic residues: residues 66 to 84 (NKLK…DSIS) and 104 to 155 (KGPE…DHNS). Positions 187–268 (TNLYVVNLSS…YELKIGWGKV (82 aa)) constitute an RRM domain. An SURP motif repeat occupies 336–379 (IIDTMALNVLDGGCAFEQAIMERGRGNPLFNFLFELGSKEHTYY). The interval 412–434 (PPLPATRSPEHGKESRGTYAAGK) is disordered. The region spanning 444-589 (LTDSQRDEFE…GLRATFLRSR (146 aa)) is the CID domain. The 35-residue stretch at 638–672 (LMNRPISELERRCRHNGLSLLGGREMMVARLVCLK) folds into the SAP domain. 2 disordered regions span residues 752 to 797 (REDD…PENE) and 846 to 947 (GLSG…RGMR). Basic and acidic residues-rich tracts occupy residues 854-876 (LPEK…RSES), 888-916 (LTRE…LDKD), and 924-947 (SSRE…RGMR).

Expressed in leaves, inflorescence stems, roots, flower buds, open flowers and siliques.

Functionally, probable SR-like splicing factor. The chain is Protein RRC1-like from Arabidopsis thaliana (Mouse-ear cress).